An 801-amino-acid chain; its full sequence is MVGSSDGDQSDDSSHFERGVDHIYEAFICPLTKEVMHDPVTLENGRTFEREAIEKWFKECRDSGRPPSCPLTSQELTSTDVSASIALRNTIEEWRSRNDAAKLDIARQSLFLGNAETDILQALMHVRQICRTIRSNRHGVRNSQLIHMIIDMLKSTSHRVRYKALQTLQVVVEGDDESKAIVAEGDTVRTLVKFLSHEPSKGREAAVSLLFELSKSEALCEKIGSIHGALILLVGLTSSNSENVSIVEKADRTLENMERSEEIVRQMASYGRLQPLLGKLLEGSPETKLSMASFLGELPLNNDVKVLVAQTVGSSLVDLMRSGDMPQREAALKALNKISSFEGSAKVLISKGILPPLIKDLFYVGPNNLPIRLKEVSATILANIVNIGYDFDKATLVSENRVENLLHLISNTGPAIQCKLLEVLVGLTSCPKTVPKVVYAIKTSGAIISLVQFIEVRENDDLRLASIKLLHNLSPFMSEELAKALCGTAGQLGSLVAIISEKTPITEEQAAAAGLLAELPDRDLGLTQEMLEVGAFEKIISKVFGIRQGDIKGMRFVNPFLEGLVRILARITFVFNKEARAINFCREHDVASLFLHLLQSNGQDNIQMVSAMALENLSLESIKLTRMPDPPPVNYCGSIFSCVRKPHVVNGLCKIHQGICSLRETFCLVEGGAVEKLVALLDHENVKVVEAALAALSSLLEDGLDVEKGVKILDEADGIRHILNVLRENRTERLTRRAVWMVERILRIEDIAREVAEEQSLSAALVDAFQNADFRTRQIAENALKHIDKIPNFSSIFPNIA.

Residues 22–101 form the U-box domain; the sequence is HIYEAFICPL…EEWRSRNDAA (80 aa). ARM repeat units follow at residues 134 to 173, 176 to 215, 218 to 259, 261 to 300, 301 to 340, 342 to 386, 390 to 429, 435 to 475, and 480 to 521; these read RSNR…VVVE, DESK…ELSK, ALCE…NMER, EEIV…ELPL, NNDV…KISS, EGSA…NIVN, DFDK…GLTS, PKVV…NLSP, and ELAK…ELPD.

Interacts with AAO3. Binds to SD129. As to expression, expressed in leaves, root vasculature and guard cells.

It carries out the reaction S-ubiquitinyl-[E2 ubiquitin-conjugating enzyme]-L-cysteine + [acceptor protein]-L-lysine = [E2 ubiquitin-conjugating enzyme]-L-cysteine + N(6)-ubiquitinyl-[acceptor protein]-L-lysine.. It participates in protein modification; protein ubiquitination. Functionally, functions as an E3 ubiquitin-protein ligase. Prevents premature senescence probably by targeting proteins involved in this process for degradation. Promotes the degradation of AAO3 and thus represses abscisic acid (ABA) biosynthesis. The chain is U-box domain-containing protein 44 (PUB44) from Arabidopsis thaliana (Mouse-ear cress).